Reading from the N-terminus, the 190-residue chain is Small ribosomal subunit protein eS7 (190 aa).

This sequence belongs to the eukaryotic ribosomal protein eS7 family.

The sequence is that of Small ribosomal subunit protein eS7 (RPS7) from Avicennia marina (Grey mangrove).